The sequence spans 297 residues: Malonyl-[acyl-carrier protein] O-methyltransferase (297 aa).

The protein belongs to the methyltransferase superfamily.

It catalyses the reaction malonyl-[ACP] + S-adenosyl-L-methionine = malonyl-[ACP] methyl ester + S-adenosyl-L-homocysteine. It functions in the pathway cofactor biosynthesis; biotin biosynthesis. Converts the free carboxyl group of a malonyl-thioester to its methyl ester by transfer of a methyl group from S-adenosyl-L-methionine (SAM). It allows to synthesize pimeloyl-ACP via the fatty acid synthetic pathway. The polypeptide is Malonyl-[acyl-carrier protein] O-methyltransferase (Laribacter hongkongensis (strain HLHK9)).